We begin with the raw amino-acid sequence, 259 residues long: Large ribosomal subunit protein uL3m (259 aa).

Residues 1–15 (MQSRFLISPTLIRTF) constitute a mitochondrion transit peptide. The span at 176 to 197 (ASHGASLSHRTPGSTGQNTTPS) shows a compositional bias: polar residues. A disordered region spans residues 176 to 208 (ASHGASLSHRTPGSTGQNTTPSRVLPGRKMAGH).

It belongs to the universal ribosomal protein uL3 family. In terms of assembly, component of the mitochondrial large ribosomal subunit (mt-LSU). Mature yeast 74S mitochondrial ribosomes consist of a small (37S) and a large (54S) subunit. The 37S small subunit contains a 15S ribosomal RNA (15S mt-rRNA) and at least 32 different proteins. The 54S large subunit contains a 21S rRNA (21S mt-rRNA) and at least 45 different proteins.

The protein resides in the cytoplasm. It is found in the mitochondrion. Functionally, component of the mitochondrial ribosome (mitoribosome), a dedicated translation machinery responsible for the synthesis of mitochondrial genome-encoded proteins, including at least some of the essential transmembrane subunits of the mitochondrial respiratory chain. The mitoribosomes are attached to the mitochondrial inner membrane and translation products are cotranslationally integrated into the membrane. The polypeptide is Large ribosomal subunit protein uL3m (mrpl9) (Schizosaccharomyces pombe (strain 972 / ATCC 24843) (Fission yeast)).